A 2220-amino-acid polypeptide reads, in one-letter code: MARPTTSAAIFSPQNSPPKRSYLAYIRSKLVDDRTLAPLLQAILSLPETWRSLVAARADMADMIEAPRLVQSFVDWINTGSTDILESELAAIVTLPLLTIIHMVQYYEYLQGAGCSHIELLESFDGGVQGHCIGLLSAIVVASAGSEEDLIARAVAGLRLSLAIGAFGDLGEYSTNLRSSTLVFRLKDMSAADEIVHRFPGTYISTVTDSRTVSMVVPGSQVTDLMAYADKNGLQPRSVHIRSRLHDATNTDMAQACREFCDSLEGLPFGAGETLLTSVRSNRTGDCLSDIPESLSTEVIDTILLSMCNWTKVMRNLVTDLKESSKSQHTLALFGIGDSVPLELFRQNDVDITKFQAVSLAPTAPSPENGLRPTDFFPSDAIAVVGAGFRLPGASTFEELWEMISEGKTRLEPFRTDRSDLKGSYRAGQDKEWTKKRNFFGNYVEDIDSFDHSFFGISPREAKYMDPQQRLLLLTAWEAMDSAGMLRYHRRERGDNVGCFVGASFNEYVENTSGYSASAFTATGTIRAFLSGKVSYHFGWTGPSEVIDTACSASIVAVHRACQAIKSGECPVAVAGGVNLITGITNYFDLAKASFLSPTGQCKPFDDSGDGYCRADGVGLVVLKSLSQAVADGDHIMGVIPSIATNQGGIGAPGITVPDGIMQRALYKKVLAKSGMRAEDITYVEAHGTGTPVGDPIEIRSIREVFGGAKRPSPLYLGSLKANVGHSETAAGVASLLKVLTMFREQGIPPIANFKRLNHNIPALETDRMAIPTSQMPWNARQRIACINSYGASGSNSALICSEWPDNNIRDAKDRISAHTPAYPILLSANSKESLQRYAKDLATYLTKTNADKNLGDLAFTLSERRKHHRYRWSTTAADMASVVDQLQSPLEGVIDSTKTGKKVVLAFSGQSRTNIGVDPSVIQAYPRFMEHMKQCSSILQSLGCPDILPYLSQTDPISDPVILQCGTVSVQISTAKCWMDGGVQVDGIVGHSLGELASLAISGVLSLKDTLTAVYTRAQLINLKWGSERGTMMAIHAKVDVIQSVIAKVKAEVSSEDDEVEIACYNSVGSHVIVGKDSSIAIAEKVLQGDAKYQGLRYQRVGTSHGFHSRFTKPLLLDLVRFEKTLEFKKPIIPLETCTQVPFNFESNDSTYLAHHARDPVYFYDAVQRLEKRLGACAFLEAGWGTPVVSMAKKAVADATQHTFQAVTSPATATANLWREGCSITFWSFLTPKQSMLKPIWTPPYSFDNSKSWLDHVDNASVALKAAEAAIAAAATQGSPSTPTEEPRAAQLVRYKGALGENAHEFGLSTSTERFTKIVSGHAVKARPLCPASVYMESAIMGCELIGTSGRDKTISFTNISFQRPLGINDKLDVKLHLSKTAKFGDEHWHYSMQSSASAVYSEGDFTMTAGPHQDMELYALLASDGMVALRNDPDAEKLRKRTAYSLFSRVVEYSDLMQGISDITFGKKAALATIQVPNHPWGSQESSVSGFYDAISLDTFIQVVGLLINCSSGTATGDEVYIASSIGNLVVSPTDFQQAQTWTVYATYSTIDSKTLSGAIFVFNEAGELVSFGSKIHFHKTSMTKLLRVLDAANPSGAKAAAAPAPRAAFAAPVAAPVAAAPVAAAAAPVAAAGPSKIPELRALISAYTGVKEADIPDDVAFASLGLDSLSAMELAGELESSLGIKVSSDDVTTSTVASLAKQLPSGGAAPAPVAAAPAPVATPAPVAAPVAAAPVAAAPAGPSRVGELRALISAFTGIKEDDIADDVSFGSLGLDSLSAMELASEMESTLGLVISSDDVTSASVSSLSAMLGGGAADVSAPKSVISSTVASTTPASDFDNQTPDVITPASECGPELHEVGSALGIPWKRASPHYSTRFRMETVVYKEIDGTEIPADIYLPAEVPSNPMPIALMIHGGGHLTLSRRAVRPPQTSYLLANGILPVSIDYRLAPHVNVVDGSMADTRDACVWLQKELPELMAAKGIIVDPSKYVVIGFSTGGTLALTTAWTTAEANVAPPRAILSFYCPVEYDPDHPVLMGQGTRPRTMTLAQIRETLPNTVAVSHSFNALDTTKLGWLQPSDPRSELTLALIKEENGMSLLFNGLPEKGEQLPRADPARCAYFSPLTQVRAGNYNNIPTFMIFGEEDEVAPFRKGVEFGQALKEAGIRGGFHAVKGGKHIFDLALTPGSQGWAEHIAPGYDFIFTELENATRGQYILPS.

An N-terminal acylcarrier protein transacylase domain (SAT) region spans residues 10–255 (IFSPQNSPPK…HDATNTDMAQ (246 aa)). Residues 379-803 (SDAIAVVGAG…GSNSALICSE (425 aa)) enclose the Ketosynthase family 3 (KS3) domain. Residues C551, H687, and H726 each act as for beta-ketoacyl synthase activity in the active site. The tract at residues 906–1207 (LAFSGQSRTN…ADATQHTFQA (302 aa)) is malonyl-CoA:ACP transacylase (MAT) domain. S993 functions as the For acyl/malonyl transferase activity in the catalytic mechanism. Residues 1287–1414 (EPRAAQLVRY…GDFTMTAGPH (128 aa)) are N-terminal hotdog fold. Residues 1287-1589 (EPRAAQLVRY…FHKTSMTKLL (303 aa)) form the PKS/mFAS DH domain. The tract at residues 1292 to 1588 (QLVRYKGALG…HFHKTSMTKL (297 aa)) is product template (PT) domain. H1323 serves as the catalytic Proton acceptor; for dehydratase activity. The segment at 1436 to 1589 (DAEKLRKRTA…FHKTSMTKLL (154 aa)) is C-terminal hotdog fold. Residue D1500 is the Proton donor; for dehydratase activity of the active site. Carrier domains follow at residues 1634–1711 (AAGP…SGGA) and 1742–1821 (PAGP…AADV). 2 positions are modified to O-(pantetheine 4'-phosphoryl)serine: S1671 and S1779. A thioesterase (TE) domain region spans residues 1879-2210 (TRFRMETVVY…YDFIFTELEN (332 aa)). Catalysis depends on for thioesterase activity residues S1999 and D2148.

The catalysed reaction is 3 malonyl-CoA + acetyl-CoA + 2 H(+) = orsellinate + 3 CO2 + 4 CoA. Its pathway is secondary metabolite biosynthesis; terpenoid biosynthesis. Functionally, non-reducing polyketide synthase; part of the cluster that mediates the biosynthesis of LL-Z1272-beta, also known as ilicicolin B, a prenylated aryl-aldehyde produced by several fungi and that serves as a key pathway intermediate for many fungal meroterpenoids. The first step in the pathway is performed by the non-reducing polyketide synthase stbA that produces orsellinic acid by condensing acetyl-CoA with 3 malonyl-CoA units. The prenyltransferase stbC then prenylates orsenilic acid into grifolic acid. Finally, grifolic acid is reduced to ilicicolin B by the NRPS-like protein stbB. This is Non-reducing polyketide synthase stbA from Stachybotrys bisbyi (Hyalostachybotrys bisbyi).